A 382-amino-acid polypeptide reads, in one-letter code: Pyrimidine monooxygenase RutA (382 aa).

FMN is bound by residues 68–69, Asn134, Glu143, 159–160, and Ser209; these read IK and RY.

This sequence belongs to the NtaA/SnaA/DszA monooxygenase family. RutA subfamily.

It carries out the reaction uracil + FMNH2 + NADH + O2 = (Z)-3-ureidoacrylate + FMN + NAD(+) + H2O + H(+). The catalysed reaction is thymine + FMNH2 + NADH + O2 = (Z)-2-methylureidoacrylate + FMN + NAD(+) + H2O + H(+). Catalyzes the pyrimidine ring opening between N-3 and C-4 by an unusual flavin hydroperoxide-catalyzed mechanism, adding oxygen atoms in the process to yield ureidoacrylate peracid, that immediately reacts with FMN forming ureidoacrylate and FMN-N(5)-oxide. The FMN-N(5)-oxide reacts spontaneously with NADH to produce FMN. Requires the flavin reductase RutF to regenerate FMN in vivo. This Escherichia coli (strain K12 / MC4100 / BW2952) protein is Pyrimidine monooxygenase RutA.